Here is a 797-residue protein sequence, read N- to C-terminus: Probable exo-1,4-beta-xylosidase bxlB (797 aa).

An N-terminal signal peptide occupies residues 1 to 21; that stretch reads MPLICIVYFLQYLDKIAISYA. 2 N-linked (GlcNAc...) asparagine glycosylation sites follow: asparagine 86 and asparagine 126. Aspartate 312 is a catalytic residue. N-linked (GlcNAc...) asparagine glycosylation is found at asparagine 364, asparagine 431, asparagine 442, asparagine 483, asparagine 644, and asparagine 787.

This sequence belongs to the glycosyl hydrolase 3 family.

The protein localises to the secreted. It catalyses the reaction Hydrolysis of (1-&gt;4)-beta-D-xylans, to remove successive D-xylose residues from the non-reducing termini.. It participates in glycan degradation; xylan degradation. Xylan 1,4-beta-xylosidase involved in the hydrolysis of xylan, a major structural heterogeneous polysaccharide found in plant biomass representing the second most abundant polysaccharide in the biosphere, after cellulose. This Aspergillus oryzae (strain ATCC 42149 / RIB 40) (Yellow koji mold) protein is Probable exo-1,4-beta-xylosidase bxlB (bxlB).